Here is a 474-residue protein sequence, read N- to C-terminus: Citrate synthase, mitochondrial (474 aa).

The N-terminal 35 residues, 1–35, are a transit peptide targeting the mitochondrion; the sequence is MASTLRLSTSALRSSTLAGKPVVQSVAFNGLRCYS. Active-site residues include H310, H356, and D411.

Belongs to the citrate synthase family.

Its subcellular location is the mitochondrion matrix. The enzyme catalyses oxaloacetate + acetyl-CoA + H2O = citrate + CoA + H(+). Its pathway is carbohydrate metabolism; tricarboxylic acid cycle; isocitrate from oxaloacetate: step 1/2. The chain is Citrate synthase, mitochondrial (citA) from Emericella nidulans (strain FGSC A4 / ATCC 38163 / CBS 112.46 / NRRL 194 / M139) (Aspergillus nidulans).